The sequence spans 247 residues: Eukaryotic translation initiation factor 6 (247 aa).

Ser174 and Ser175 each carry phosphoserine; by CK1.

The protein belongs to the eIF-6 family. As to quaternary structure, monomer. Associates with the 60S ribosomal subunit. In terms of processing, phosphorylation at Ser-174 and Ser-175 promotes nuclear export.

The protein resides in the cytoplasm. The protein localises to the nucleus. It localises to the nucleolus. Functionally, binds to the 60S ribosomal subunit and prevents its association with the 40S ribosomal subunit to form the 80S initiation complex in the cytoplasm. Is also involved in ribosome biogenesis. Associates with pre-60S subunits in the nucleus and is involved in its nuclear export. The sequence is that of Eukaryotic translation initiation factor 6 (tif6) from Talaromyces stipitatus (strain ATCC 10500 / CBS 375.48 / QM 6759 / NRRL 1006) (Penicillium stipitatum).